Reading from the N-terminus, the 355-residue chain is UDP-N-acetylglucosamine--N-acetylmuramyl-(pentapeptide) pyrophosphoryl-undecaprenol N-acetylglucosamine transferase (355 aa).

Residues 15–17, N127, R163, S191, I244, 263–268, and Q288 contribute to the UDP-N-acetyl-alpha-D-glucosamine site; these read TGG and ALTVSE.

The protein belongs to the glycosyltransferase 28 family. MurG subfamily.

Its subcellular location is the cell inner membrane. The catalysed reaction is di-trans,octa-cis-undecaprenyl diphospho-N-acetyl-alpha-D-muramoyl-L-alanyl-D-glutamyl-meso-2,6-diaminopimeloyl-D-alanyl-D-alanine + UDP-N-acetyl-alpha-D-glucosamine = di-trans,octa-cis-undecaprenyl diphospho-[N-acetyl-alpha-D-glucosaminyl-(1-&gt;4)]-N-acetyl-alpha-D-muramoyl-L-alanyl-D-glutamyl-meso-2,6-diaminopimeloyl-D-alanyl-D-alanine + UDP + H(+). The protein operates within cell wall biogenesis; peptidoglycan biosynthesis. In terms of biological role, cell wall formation. Catalyzes the transfer of a GlcNAc subunit on undecaprenyl-pyrophosphoryl-MurNAc-pentapeptide (lipid intermediate I) to form undecaprenyl-pyrophosphoryl-MurNAc-(pentapeptide)GlcNAc (lipid intermediate II). This chain is UDP-N-acetylglucosamine--N-acetylmuramyl-(pentapeptide) pyrophosphoryl-undecaprenol N-acetylglucosamine transferase, found in Salmonella typhi.